A 281-amino-acid polypeptide reads, in one-letter code: Oxidase pynE (281 aa).

It belongs to the avfA family.

Its pathway is secondary metabolite biosynthesis. Oxidase; part of the gene cluster that mediates the biosynthesis of pyranonigrins, a family of antioxidative compounds. The first step of pyranonigrins biosynthesis is performed by the hybrid PKS-NRPS synthetase that condenses 6 malonyl-CoA units to an acetyl starter unit, to form a 1,3,5-trioxotetradecane-6,8-dienyl-ACP. The enoyl reductase (ER) domain of pynA is likely to be functional during the first two rounds of polyketide chain extension, to generate the saturated C-C bonds of the alkyl side chain. PynA subsequently forms the amide bond between the acyl chain and L-serine. Although pynA has a terminal reductase domain, it appears to require the thioesterase pynI for the release of the straight-chain intermediate from pynA via the formation of a tetramic acid pyranonigrin J. The methyltransferase pynC then coverts pyranonigrin J to pyranonigrin I via N-methylation. The FAD-dependent monooxygenase pynG catalyzes an epoxidation-mediated cyclization to form the dihydro-gamma-pyrone moiety, followed by pynD-catalyzed oxidation of the alcohol to the ketone and enolization to yield the characteristic tetramic acid-fused gamma-pyrone core of pyranonigrin H. Pyranonigrin H is substrate of pynH for dehydration-mediated exo-methylene formation from the serine side chain to produce pyranonigrin E, before the oxidase pynE reduces the exo-methylene of pyranonigrin E into a pendant methyl to form pyranonigrin G. The FAD-linked oxidoreductase pynB performs the reverse reaction and converts pyranonigrin G back to pyranonigrin E. The protein is Oxidase pynE of Aspergillus niger (strain ATCC MYA-4892 / CBS 513.88 / FGSC A1513).